Consider the following 159-residue polypeptide: Transmembrane protein 88 (159 aa).

The next 2 helical transmembrane spans lie at 43–63 (LLLL…MLGF) and 88–108 (FTAL…LALA). Residues 137–159 (PQPRQIRASPGSQAVPTSGKVWV) form a disordered region.

It belongs to the TMEM88 family. As to quaternary structure, interacts (via C-terminus) with DVL1.

Its subcellular location is the cell membrane. In terms of biological role, inhibits the Wnt/beta-catenin signaling pathway. Crucial for heart development and acts downstream of GATA factors in the pre-cardiac mesoderm to specify lineage commitment of cardiomyocyte development. In Homo sapiens (Human), this protein is Transmembrane protein 88 (TMEM88).